A 227-amino-acid polypeptide reads, in one-letter code: Cytochrome c oxidase subunit 2 (227 aa).

Residues 1 to 14 (MAYPMQLGFQDATS) lie on the Mitochondrial intermembrane side of the membrane. The chain crosses the membrane as a helical span at residues 15 to 45 (PIMEELLHFHDHTLMIVFLISSLVLYIISLM). Residues 46 to 59 (LTTKLTHTSTMDAQ) are Mitochondrial matrix-facing. A helical transmembrane segment spans residues 60–87 (EVETIWTILPAIILIMIALPSLRILYMM). Topologically, residues 88–227 (DEINNPSLTV…YFEKWSASML (140 aa)) are mitochondrial intermembrane. Residues C196, E198, C200, H204, and M207 each coordinate Cu cation. E198 serves as a coordination point for Mg(2+). Y218 is subject to Phosphotyrosine.

The protein belongs to the cytochrome c oxidase subunit 2 family. As to quaternary structure, component of the cytochrome c oxidase (complex IV, CIV), a multisubunit enzyme composed of 14 subunits. The complex is composed of a catalytic core of 3 subunits MT-CO1, MT-CO2 and MT-CO3, encoded in the mitochondrial DNA, and 11 supernumerary subunits COX4I, COX5A, COX5B, COX6A, COX6B, COX6C, COX7A, COX7B, COX7C, COX8 and NDUFA4, which are encoded in the nuclear genome. The complex exists as a monomer or a dimer and forms supercomplexes (SCs) in the inner mitochondrial membrane with NADH-ubiquinone oxidoreductase (complex I, CI) and ubiquinol-cytochrome c oxidoreductase (cytochrome b-c1 complex, complex III, CIII), resulting in different assemblies (supercomplex SCI(1)III(2)IV(1) and megacomplex MCI(2)III(2)IV(2)). Found in a complex with TMEM177, COA6, COX18, COX20, SCO1 and SCO2. Interacts with TMEM177 in a COX20-dependent manner. Interacts with COX20. Interacts with COX16. It depends on Cu cation as a cofactor.

It localises to the mitochondrion inner membrane. The catalysed reaction is 4 Fe(II)-[cytochrome c] + O2 + 8 H(+)(in) = 4 Fe(III)-[cytochrome c] + 2 H2O + 4 H(+)(out). In terms of biological role, component of the cytochrome c oxidase, the last enzyme in the mitochondrial electron transport chain which drives oxidative phosphorylation. The respiratory chain contains 3 multisubunit complexes succinate dehydrogenase (complex II, CII), ubiquinol-cytochrome c oxidoreductase (cytochrome b-c1 complex, complex III, CIII) and cytochrome c oxidase (complex IV, CIV), that cooperate to transfer electrons derived from NADH and succinate to molecular oxygen, creating an electrochemical gradient over the inner membrane that drives transmembrane transport and the ATP synthase. Cytochrome c oxidase is the component of the respiratory chain that catalyzes the reduction of oxygen to water. Electrons originating from reduced cytochrome c in the intermembrane space (IMS) are transferred via the dinuclear copper A center (CU(A)) of subunit 2 and heme A of subunit 1 to the active site in subunit 1, a binuclear center (BNC) formed by heme A3 and copper B (CU(B)). The BNC reduces molecular oxygen to 2 water molecules using 4 electrons from cytochrome c in the IMS and 4 protons from the mitochondrial matrix. The sequence is that of Cytochrome c oxidase subunit 2 (MT-CO2) from Ovis aries (Sheep).